The following is a 320-amino-acid chain: D-amino-acid oxidase (320 aa).

Residues G18, G19, V20, I21, T47, T48, S49, G53, G54, L55, V161, and T176 each contribute to the FAD site. Residues Y220 and R275 each contribute to the D-proline site. The D-serine site is built by Y220 and R275. Positions 275, 301, 302, 304, and 306 each coordinate FAD. G302 serves as a coordination point for D-proline. G302 provides a ligand contact to D-serine.

The protein belongs to the DAMOX/DASOX family. FAD serves as cofactor.

It is found in the cytoplasm. The protein resides in the secreted. The protein localises to the cell wall. The catalysed reaction is a D-alpha-amino acid + O2 + H2O = a 2-oxocarboxylate + H2O2 + NH4(+). It carries out the reaction D-leucine + O2 + H2O = 4-methyl-2-oxopentanoate + H2O2 + NH4(+). It catalyses the reaction D-valine + O2 + H2O = 3-methyl-2-oxobutanoate + H2O2 + NH4(+). The enzyme catalyses D-isoleucine + O2 + H2O = (R)-3-methyl-2-oxopentanoate + H2O2 + NH4(+). The catalysed reaction is D-methionine + O2 + H2O = 4-methylsulfanyl-2-oxobutanoate + H2O2 + NH4(+). Functionally, catalyzes the oxidative deamination of D-amino acids with broad substrate specificity. The chain is D-amino-acid oxidase from Streptomyces coelicolor (strain ATCC BAA-471 / A3(2) / M145).